The sequence spans 217 residues: Putative N-acetylmuramoyl-L-alanine amidase (217 aa).

Residues 3-206 form the MurNAc-LAA domain; the sequence is IAIDAGHGGQ…ISKSISIALK (204 aa).

The protein belongs to the N-acetylmuramoyl-L-alanine amidase 3 family.

Its subcellular location is the secreted. The catalysed reaction is Hydrolyzes the link between N-acetylmuramoyl residues and L-amino acid residues in certain cell-wall glycopeptides.. In terms of biological role, cell-wall hydrolase involved in septum cleavage during cell division. The polypeptide is Putative N-acetylmuramoyl-L-alanine amidase (amiB) (Buchnera aphidicola subsp. Baizongia pistaciae (strain Bp)).